Here is a 251-residue protein sequence, read N- to C-terminus: GTP cyclohydrolase FolE2 (251 aa).

This sequence belongs to the GTP cyclohydrolase IV family.

The enzyme catalyses GTP + H2O = 7,8-dihydroneopterin 3'-triphosphate + formate + H(+). It functions in the pathway cofactor biosynthesis; 7,8-dihydroneopterin triphosphate biosynthesis; 7,8-dihydroneopterin triphosphate from GTP: step 1/1. Converts GTP to 7,8-dihydroneopterin triphosphate. In Desulfotalea psychrophila (strain LSv54 / DSM 12343), this protein is GTP cyclohydrolase FolE2.